The sequence spans 95 residues: Small ribosomal subunit protein bS6 (95 aa).

This sequence belongs to the bacterial ribosomal protein bS6 family.

Functionally, binds together with bS18 to 16S ribosomal RNA. The sequence is that of Small ribosomal subunit protein bS6 from Bacillus cytotoxicus (strain DSM 22905 / CIP 110041 / 391-98 / NVH 391-98).